We begin with the raw amino-acid sequence, 378 residues long: Glutamate 5-kinase (378 aa).

Lysine 14 contacts ATP. The substrate site is built by serine 54, aspartate 141, and asparagine 153. ATP is bound at residue 173–174 (SD). The region spanning 279 to 356 (AGRLTVDAGA…DEISAILGYD (78 aa)) is the PUA domain.

This sequence belongs to the glutamate 5-kinase family.

It localises to the cytoplasm. It carries out the reaction L-glutamate + ATP = L-glutamyl 5-phosphate + ADP. It functions in the pathway amino-acid biosynthesis; L-proline biosynthesis; L-glutamate 5-semialdehyde from L-glutamate: step 1/2. In terms of biological role, catalyzes the transfer of a phosphate group to glutamate to form L-glutamate 5-phosphate. In Brucella abortus (strain S19), this protein is Glutamate 5-kinase.